The chain runs to 444 residues: Trigger factor (444 aa).

The PPIase FKBP-type domain occupies 160–245; the sequence is DMQVTFDFEG…VKQVEKPKLP (86 aa).

Belongs to the FKBP-type PPIase family. Tig subfamily.

The protein resides in the cytoplasm. The enzyme catalyses [protein]-peptidylproline (omega=180) = [protein]-peptidylproline (omega=0). In terms of biological role, involved in protein export. Acts as a chaperone by maintaining the newly synthesized protein in an open conformation. Functions as a peptidyl-prolyl cis-trans isomerase. The protein is Trigger factor of Acinetobacter baumannii (strain AB0057).